The primary structure comprises 202 residues: Ion-translocating oxidoreductase complex subunit G (202 aa).

Residues 11-31 (ACLMGFFSFFSLSSVIFVKNI) traverse the membrane as a helical segment. Thr-176 is modified (FMN phosphoryl threonine).

This sequence belongs to the RnfG family. In terms of assembly, the complex is composed of six subunits: RnfA, RnfB, RnfC, RnfD, RnfE and RnfG. FMN serves as cofactor.

The protein resides in the cell inner membrane. In terms of biological role, part of a membrane-bound complex that couples electron transfer with translocation of ions across the membrane. The protein is Ion-translocating oxidoreductase complex subunit G of Buchnera aphidicola subsp. Schizaphis graminum (strain Sg).